The primary structure comprises 493 residues: Cobyric acid synthase (493 aa).

One can recognise a GATase cobBQ-type domain in the interval 246–440; sequence PIDIAVIKMP…IHGVFDGVAF (195 aa). Cysteine 326 serves as the catalytic Nucleophile. Histidine 432 is a catalytic residue.

Belongs to the CobB/CobQ family. CobQ subfamily.

It participates in cofactor biosynthesis; adenosylcobalamin biosynthesis. In terms of biological role, catalyzes amidations at positions B, D, E, and G on adenosylcobyrinic A,C-diamide. NH(2) groups are provided by glutamine, and one molecule of ATP is hydrogenolyzed for each amidation. In Clostridium botulinum (strain Loch Maree / Type A3), this protein is Cobyric acid synthase.